The following is a 650-amino-acid chain: Gamma-tubulin complex component 4 homolog (650 aa).

The residue at position 214 (serine 214) is a Phosphoserine. Threonine 216 is modified (phosphothreonine). Serine 218 bears the Phosphoserine mark.

Belongs to the TUBGCP family.

It localises to the cytoplasm. It is found in the cytoskeleton. The protein localises to the microtubule organizing center. Its subcellular location is the centrosome. Its function is as follows. Gamma-tubulin complex is necessary for microtubule nucleation at the centrosome. In Drosophila melanogaster (Fruit fly), this protein is Gamma-tubulin complex component 4 homolog (Grip75).